The sequence spans 122 residues: Fluoride-specific ion channel FluC (122 aa).

Helical transmembrane passes span 1–21 (MIGT…SRML), 34–54 (FPYG…LFFS), 60–80 (GVHI…FTTF), and 100–120 (FLNI…GFLI).

Belongs to the fluoride channel Fluc/FEX (TC 1.A.43) family.

The protein localises to the cell inner membrane. It catalyses the reaction fluoride(in) = fluoride(out). Fluoride-specific ion channel. Important for reducing fluoride concentration in the cell, thus reducing its toxicity. This chain is Fluoride-specific ion channel FluC, found in Campylobacter lari (strain RM2100 / D67 / ATCC BAA-1060).